A 194-amino-acid polypeptide reads, in one-letter code: Protein A43 (194 aa).

Positions 1-22 (MMMMKWIISILTMSIMPVLAYS) are cleaved as a signal peptide. At 23 to 165 (SSIFRFHSED…YKDINDKYND (143 aa)) the chain is on the extracellular side. Asparagine 65 and asparagine 114 each carry an N-linked (GlcNAc...) asparagine; by host glycan. Residues 166–186 (IYDFTAICMLIASTLIVTIYV) form a helical membrane-spanning segment. The Cytoplasmic segment spans residues 187-194 (FKKIKMNS).

This sequence belongs to the orthopoxvirus OPG172 protein family.

Its subcellular location is the host membrane. The protein resides in the host cell surface. This Homo sapiens (Human) protein is Protein A43 (OPG172).